A 262-amino-acid chain; its full sequence is Triosephosphate isomerase (262 aa).

9-11 (NWK) lines the substrate pocket. His99 serves as the catalytic Electrophile. The Proton acceptor role is filled by Glu171. Residues Gly177 and Ser216 each contribute to the substrate site.

Belongs to the triosephosphate isomerase family. As to quaternary structure, homodimer.

The protein resides in the cytoplasm. It carries out the reaction D-glyceraldehyde 3-phosphate = dihydroxyacetone phosphate. It participates in carbohydrate biosynthesis; gluconeogenesis. The protein operates within carbohydrate degradation; glycolysis; D-glyceraldehyde 3-phosphate from glycerone phosphate: step 1/1. Its function is as follows. Involved in the gluconeogenesis. Catalyzes stereospecifically the conversion of dihydroxyacetone phosphate (DHAP) to D-glyceraldehyde-3-phosphate (G3P). The polypeptide is Triosephosphate isomerase (Blochmanniella floridana).